A 63-amino-acid chain; its full sequence is DNA-directed RNA polymerase 7 kDa subunit (63 aa).

The protein belongs to the poxviridae DNA-directed RNA polymerase 7 kDa subunit family. The DNA-dependent RNA polymerase used for intermediate and late genes expression consists of eight subunits 147 kDa, 133 kDa, 35 kDa, 30 kDa, 22 kDa, 19 kDa, 18 kDa and 7 kDa totalling more than 500 kDa in mass. The same holoenzyme, with the addition of the transcription-specificity factor RAP94, is used for early gene expression.

Its subcellular location is the virion. It carries out the reaction RNA(n) + a ribonucleoside 5'-triphosphate = RNA(n+1) + diphosphate. In terms of biological role, part of the DNA-dependent RNA polymerase which catalyzes the transcription of viral DNA into RNA using the four ribonucleoside triphosphates as substrates. Responsible for the transcription of early, intermediate and late genes. DNA-dependent RNA polymerase associates with the early transcription factor (ETF) thereby allowing the early genes transcription. Late transcription, and probably also intermediate transcription, require newly synthesized RNA polymerase. This chain is DNA-directed RNA polymerase 7 kDa subunit (RPO7), found in Molluscum contagiosum virus subtype 1 (MOCV).